A 292-amino-acid polypeptide reads, in one-letter code: uncharacterized protein (292 aa).

Residues Leu-17, Asp-55, Asn-82, and Lys-115 each contribute to the NADP(+) site. The active-site Proton donor is the Ser-134. Residues Tyr-148, Lys-152, and Thr-184 each contribute to the NADP(+) site. The Proton acceptor role is filled by Tyr-148. Lys-152 serves as the catalytic Lowers pKa of active site Tyr.

Belongs to the short-chain dehydrogenases/reductases (SDR) family.

It localises to the cytoplasm. This is an uncharacterized protein from Schizosaccharomyces pombe (strain 972 / ATCC 24843) (Fission yeast).